An 82-amino-acid polypeptide reads, in one-letter code: Large ribosomal subunit protein bL31B (82 aa).

The protein belongs to the bacterial ribosomal protein bL31 family. Type B subfamily. In terms of assembly, part of the 50S ribosomal subunit after the end of exponential growth.

While neither of the L31 paralogs is essential, this protein does not seem to function as the main L31 protein. Has a higher affinity for 70S ribosomes than the zinc-containing L31 paralog; is able to displace it to varying extents, even under zinc-replete conditions. The protein is Large ribosomal subunit protein bL31B (rpmE2) of Bacillus subtilis (strain 168).